The chain runs to 490 residues: Cytochrome P450 71B29 (490 aa).

Residues 1–21 (MAIILCFLILLPLILIFLKKL) traverse the membrane as a helical segment. C440 lines the heme pocket.

Belongs to the cytochrome P450 family. Requires heme as cofactor.

The protein resides in the membrane. In Arabidopsis thaliana (Mouse-ear cress), this protein is Cytochrome P450 71B29 (CYP71B29).